Consider the following 333-residue polypeptide: 1,5-anhydro-D-fructose reductase (333 aa).

NADP(+) contacts are provided by residues 9 to 12 (ASTI), 33 to 34 (SS), Arg38, 71 to 76 (TTNELH), 93 to 94 (EK), Asn120, 162 to 163 (WR), and Tyr283.

The protein belongs to the Gfo/Idh/MocA family. As to quaternary structure, monomer.

The catalysed reaction is 1,5-anhydro-D-mannitol + NADP(+) = 1,5-anhydro-D-fructose + NADPH + H(+). In terms of biological role, catalyzes the NADPH-specific reduction of 1,5-anhydro-D-fructose to 1,5-anhydro-D-mannitol. The chain is 1,5-anhydro-D-fructose reductase (afr) from Rhizobium meliloti (strain 1021) (Ensifer meliloti).